A 249-amino-acid polypeptide reads, in one-letter code: Ribosomal RNA small subunit methyltransferase G (249 aa).

Residues G88, F93, D111–T113, A139–E140, and R158 each bind S-adenosyl-L-methionine. C164 and C249 form a disulfide bridge. Residues R245–H246 form an RNA binding region.

This sequence belongs to the methyltransferase superfamily. RNA methyltransferase RsmG family.

Its subcellular location is the cytoplasm. The catalysed reaction is guanosine(527) in 16S rRNA + S-adenosyl-L-methionine = N(7)-methylguanosine(527) in 16S rRNA + S-adenosyl-L-homocysteine. Its function is as follows. Specifically methylates the N7 position of guanine in position 527 of 16S rRNA. Shows a marked preference for deproteinized 16S rRNA as substrate and is completely inactive with native 30S subunits as substrate. This Thermus thermophilus (strain ATCC 27634 / DSM 579 / HB8) protein is Ribosomal RNA small subunit methyltransferase G.